Consider the following 69-residue polypeptide: Small ribosomal subunit protein bS21 (69 aa).

Belongs to the bacterial ribosomal protein bS21 family.

The chain is Small ribosomal subunit protein bS21 (rpsU) from Treponema pallidum (strain Nichols).